Here is a 276-residue protein sequence, read N- to C-terminus: NADPH-dependent 7-cyano-7-deazaguanine reductase (276 aa).

83–85 (IES) contacts substrate. An NADPH-binding site is contributed by 85–86 (SK). Cys184 acts as the Thioimide intermediate in catalysis. The Proton donor role is filled by Asp191. Position 223–224 (223–224 (HE)) interacts with substrate. 252-253 (RG) contributes to the NADPH binding site.

This sequence belongs to the GTP cyclohydrolase I family. QueF type 2 subfamily. Homodimer.

It localises to the cytoplasm. It catalyses the reaction 7-aminomethyl-7-carbaguanine + 2 NADP(+) = 7-cyano-7-deazaguanine + 2 NADPH + 3 H(+). The protein operates within tRNA modification; tRNA-queuosine biosynthesis. In terms of biological role, catalyzes the NADPH-dependent reduction of 7-cyano-7-deazaguanine (preQ0) to 7-aminomethyl-7-deazaguanine (preQ1). The protein is NADPH-dependent 7-cyano-7-deazaguanine reductase of Desulfotalea psychrophila (strain LSv54 / DSM 12343).